Reading from the N-terminus, the 509-residue chain is MRKPTALIILDGFGLREETYGNAVAQAKKPNFDGYWNKFPHTTLTACGEAVGLPEGQMGNSEVGHLNIGAGRIVYQSLTRVNVAIREGEFDKNETFQSAIKSVKEKGTALHLFGLLSDGGVHSHMNHMFALLRLAAKEGVEKVYIHAFLDGRDVGPKTAQSYIDATNEVIKETGVGQFATISGRYYSMDRDKRWDRVEKCYRAMVNGEGPTYKSAEECVEDSYANGIYDEFVLPSVIVNEDNTPVATINDDDAVIFYNFRPDRAIQIARVFTNEDFREFDRGEKVPHIPEFVCMTHFSETVDGYVAFKPMNLDNTLGEVVAQAGLKQLRIAETEKYPHVTFFFSGGREAEFPGEERILINSPKVATYDLKPEMSIYEVTDALVNEIENDKHDVIILNFANCDMVGHSGMMEPTIKAVEATDECLGKVVEAILAKDGVALITADHGNADEELTSEGEPMTAHTTNPVPFIVTKNDVELREDGILGDIAPTMLTLLGVEQPKEMTGKTIIK.

Mn(2+) is bound at residue aspartate 11. Residue tyrosine 35 is modified to Phosphotyrosine. Serine 61 contacts Mn(2+). Catalysis depends on serine 61, which acts as the Phosphoserine intermediate. Residues histidine 122, 152 to 153 (RD), arginine 184, arginine 190, 260 to 263 (RPDR), and lysine 335 each bind substrate. Aspartate 402, histidine 406, aspartate 443, histidine 444, and histidine 461 together coordinate Mn(2+).

It belongs to the BPG-independent phosphoglycerate mutase family. Monomer. It depends on Mn(2+) as a cofactor.

The enzyme catalyses (2R)-2-phosphoglycerate = (2R)-3-phosphoglycerate. Its pathway is carbohydrate degradation; glycolysis; pyruvate from D-glyceraldehyde 3-phosphate: step 3/5. Its function is as follows. Essential for rapid growth and for sporulation. Catalyzes the interconversion of 2-phosphoglycerate and 3-phosphoglycerate. The polypeptide is 2,3-bisphosphoglycerate-independent phosphoglycerate mutase (Bacillus cereus (strain ATCC 14579 / DSM 31 / CCUG 7414 / JCM 2152 / NBRC 15305 / NCIMB 9373 / NCTC 2599 / NRRL B-3711)).